The primary structure comprises 190 residues: Threonylcarbamoyl-AMP synthase (190 aa).

The region spanning 7-190 (GDAIAAAIDV…ALTGELFRQG (184 aa)) is the YrdC-like domain.

It belongs to the SUA5 family. TsaC subfamily.

It is found in the cytoplasm. It catalyses the reaction L-threonine + hydrogencarbonate + ATP = L-threonylcarbamoyladenylate + diphosphate + H2O. Required for the formation of a threonylcarbamoyl group on adenosine at position 37 (t(6)A37) in tRNAs that read codons beginning with adenine. Catalyzes the conversion of L-threonine, HCO(3)(-)/CO(2) and ATP to give threonylcarbamoyl-AMP (TC-AMP) as the acyladenylate intermediate, with the release of diphosphate. The chain is Threonylcarbamoyl-AMP synthase from Shigella boydii serotype 4 (strain Sb227).